The primary structure comprises 1015 residues: GTPase-activating Rap/Ran-GAP domain-like protein 3 (1015 aa).

Positions 200-416 constitute a Rap-GAP domain; that stretch reads LLVLEEQEGS…RTLDMLIRSL (217 aa). In terms of domain architecture, CNH spans 498–812; it reads PYDIVCGDSW…QLTASRSDIY (315 aa). Disordered regions lie at residues 821 to 842 and 924 to 1004; these read SASNCSSRDTSSQSSPQTPTGY and ELLG…FTFS. Low complexity predominate over residues 823 to 835; sequence SNCSSRDTSSQSS. Residues 949-959 show a composition bias toward basic and acidic residues; the sequence is KNKEEEQKRTA.

It belongs to the GARNL3 family.

This chain is GTPase-activating Rap/Ran-GAP domain-like protein 3 (garnl3), found in Danio rerio (Zebrafish).